The sequence spans 58 residues: Probable ferredoxin (58 aa).

4Fe-4S ferredoxin-type domains lie at 2 to 30 and 31 to 58; these read VAKV…LNDD and GIAT…ITIE. [4Fe-4S] cluster contacts are provided by Cys-10, Cys-13, Cys-16, Cys-20, Cys-40, Cys-43, Cys-46, and Cys-50.

[4Fe-4S] cluster is required as a cofactor.

Ferredoxins are iron-sulfur proteins that transfer electrons in a wide variety of metabolic reactions. This is Probable ferredoxin from Methanosarcina thermophila.